Here is a 1069-residue protein sequence, read N- to C-terminus: Degenerin-like protein del-10 (1069 aa).

Residues 1–95 lie on the Cytoplasmic side of the membrane; it reads MVRMAERLAE…LNAASPVTRG (95 aa). Residues 96 to 116 traverse the membrane as a helical segment; the sequence is LWCMIIIAFVILVLVQCYSQI. The Extracellular segment spans residues 117 to 830; it reads KLYISEPVAT…FWSLACDIGG (714 aa). Asn216, Asn290, Asn374, Asn454, Asn539, Asn545, and Asn584 each carry an N-linked (GlcNAc...) asparagine glycan. Residues 831–851 traverse the membrane as a helical segment; it reads ALGLFLGASLLTIIEIVYLCI. Residues 852 to 1069 lie on the Cytoplasmic side of the membrane; sequence QYGLCGKRAR…EEDDDKHSYV (218 aa). 2 disordered regions span residues 898-948 and 960-1069; these read KKSQ…TLTP and RNSQ…HSYV. A compositionally biased stretch (basic and acidic residues) spans 915 to 928; the sequence is GDKFRSRASSEESK. Over residues 938–948 the composition is skewed to polar residues; that stretch reads NDPSGNSTLTP. The segment covering 967–978 has biased composition (basic and acidic residues); it reads YHDDHHPEDHYY.

The protein belongs to the amiloride-sensitive sodium channel (TC 1.A.6) family.

The protein localises to the membrane. This Caenorhabditis elegans protein is Degenerin-like protein del-10.